We begin with the raw amino-acid sequence, 242 residues long: Stress response regulator protein 1 (242 aa).

Positions 118 to 236 constitute a Response regulatory domain; that stretch reads NFLLVDDNFI…FDHIITCIEK (119 aa). Asp169 is modified (4-aspartylphosphate).

In terms of biological role, required for stress adaptation, morphogenesis and virulence. This is Stress response regulator protein 1 (SRR1) from Debaryomyces hansenii (strain ATCC 36239 / CBS 767 / BCRC 21394 / JCM 1990 / NBRC 0083 / IGC 2968) (Yeast).